A 59-amino-acid chain; its full sequence is Large ribosomal subunit protein bL32c (59 aa).

The segment at 37 to 59 (SRSFSSGNEHPKPKGFSGQQANK) is disordered.

The protein belongs to the bacterial ribosomal protein bL32 family.

It is found in the plastid. The protein resides in the chloroplast. This is Large ribosomal subunit protein bL32c from Saccharum hybrid (Sugarcane).